A 230-amino-acid chain; its full sequence is Orotidine 5'-phosphate decarboxylase (230 aa).

Substrate contacts are provided by residues Asp-11, Lys-34, 61–70 (DLKLHDIPNT), Thr-117, Arg-179, Gln-188, Gly-208, and Arg-209. The active-site Proton donor is Lys-63.

This sequence belongs to the OMP decarboxylase family. Type 1 subfamily. Homodimer.

The enzyme catalyses orotidine 5'-phosphate + H(+) = UMP + CO2. The protein operates within pyrimidine metabolism; UMP biosynthesis via de novo pathway; UMP from orotate: step 2/2. Functionally, catalyzes the decarboxylation of orotidine 5'-monophosphate (OMP) to uridine 5'-monophosphate (UMP). This Streptococcus pyogenes serotype M6 (strain ATCC BAA-946 / MGAS10394) protein is Orotidine 5'-phosphate decarboxylase.